The primary structure comprises 493 residues: MADSEALPSLAGDPVAVEALLRAVFGVVVDEAIQKGTSVSQKVCEWKEPEELKQLLDLELRSQGESQKQILERCRAVIRYSVKTGHPRFFNQLFSGLDPHALAGRIITESLNTSQYTYEIAPVFVLMEEEVLRKLRALVGWSSGDGIFCPGGSISNMYAVNLARYQRYPDCKQRGLRTLPPLALFTSKECHYSIQKGAAFLGLGTDSVRVVKADERGKMVPEDLERQIGMAEAEGAVPFLVSATSGTTVLGAFDPLEAIADVCQRHGLWLHVDAAWGGSVLLSQTHRHLLDGIQRADSVAWNPHKLLAAGLQCSALLLQDTSNLLKRCHGSQASYLFQQDKFYDVALDTGDKVVQCGRRVDCLKLWLMWKAQGDQGLERRIDQAFVLARYLVEEMKKREGFELVMEPEFVNVCFWFVPPSLRGKQESPDYHERLSKVAPVLKERMVKEGSMMIGYQPHGTRGNFFRVVVANSALTCADMDFLLNELERLGQDL.

Lysine 305 bears the N6-(pyridoxal phosphate)lysine mark.

It belongs to the group II decarboxylase family. Homodimer. Requires pyridoxal 5'-phosphate as cofactor. Expressed in liver and brain. Also expressed in both astrocytes and neurons, but lower levels are expressed in astrocytes.

It carries out the reaction L-aspartate + H(+) = beta-alanine + CO2. It catalyses the reaction 3-sulfino-L-alanine + H(+) = hypotaurine + CO2. The catalysed reaction is L-cysteate + H(+) = taurine + CO2. The protein operates within organosulfur biosynthesis; taurine biosynthesis; hypotaurine from L-cysteine: step 2/2. In terms of biological role, catalyzes the decarboxylation of L-aspartate, 3-sulfino-L-alanine (cysteine sulfinic acid), and L-cysteate to beta-alanine, hypotaurine and taurine, respectively. The preferred substrate is 3-sulfino-L-alanine. Does not exhibit any decarboxylation activity toward glutamate. This is Cysteine sulfinic acid decarboxylase (CSAD) from Homo sapiens (Human).